The chain runs to 71 residues: MRKSFYTWLMTERNPKSNSPKAILADLAFEEAAFPKHTDDFDEVSRFLEEHASFSFNLGDFDSIWQEYLEH.

The protein belongs to the UPF0346 family.

This is UPF0346 protein SP70585_0986 from Streptococcus pneumoniae (strain 70585).